The sequence spans 131 residues: Holo-[acyl-carrier-protein] synthase (131 aa).

Positions 8 and 63 each coordinate Mg(2+).

The protein belongs to the P-Pant transferase superfamily. AcpS family. Mg(2+) serves as cofactor.

The protein localises to the cytoplasm. The catalysed reaction is apo-[ACP] + CoA = holo-[ACP] + adenosine 3',5'-bisphosphate + H(+). Its function is as follows. Transfers the 4'-phosphopantetheine moiety from coenzyme A to a Ser of acyl-carrier-protein. The sequence is that of Holo-[acyl-carrier-protein] synthase from Shewanella halifaxensis (strain HAW-EB4).